The sequence spans 1398 residues: DNA-directed RNA polymerase subunit beta' (1398 aa).

Positions 71, 73, 86, and 89 each coordinate Zn(2+). Asp462, Asp464, and Asp466 together coordinate Mg(2+). Residues Cys810, Cys883, Cys890, and Cys893 each contribute to the Zn(2+) site. The disordered stretch occupies residues 1377-1398 (EKQAAVVSPAPEAELPALPPAE). Residues 1380 to 1392 (AAVVSPAPEAELP) are compositionally biased toward low complexity.

It belongs to the RNA polymerase beta' chain family. As to quaternary structure, the RNAP catalytic core consists of 2 alpha, 1 beta, 1 beta' and 1 omega subunit. When a sigma factor is associated with the core the holoenzyme is formed, which can initiate transcription. Requires Mg(2+) as cofactor. It depends on Zn(2+) as a cofactor.

It catalyses the reaction RNA(n) + a ribonucleoside 5'-triphosphate = RNA(n+1) + diphosphate. Its function is as follows. DNA-dependent RNA polymerase catalyzes the transcription of DNA into RNA using the four ribonucleoside triphosphates as substrates. This chain is DNA-directed RNA polymerase subunit beta', found in Bradyrhizobium diazoefficiens (strain JCM 10833 / BCRC 13528 / IAM 13628 / NBRC 14792 / USDA 110).